Reading from the N-terminus, the 70-residue chain is Plasticin-S1 (70 aa).

An N-terminal signal peptide occupies residues Met1 to Cys22. A propeptide spanning residues Glu23–Arg45 is cleaved from the precursor. The segment at Glu25–Arg45 is disordered.

This sequence belongs to the frog skin active peptide (FSAP) family. Plasticin subfamily. As to expression, expressed by the skin glands.

It localises to the secreted. In terms of biological role, the native peptide is a cationic amphipathic alpha-helical antimicrobial peptide with potent activity against both Gram-positive and Gram-negative bacteria. It has weak activity against fungi and shows low hemolytic activity. The chain is Plasticin-S1 from Phyllomedusa sauvagei (Sauvage's leaf frog).